Consider the following 243-residue polypeptide: Venom nerve growth factor 1 (243 aa).

The first 18 residues, 1 to 18 (MSMLCYTLIIAFLIGIWA), serve as a signal peptide directing secretion. Residues 19-125 (VPKSEDNAPL…ALNRNIRAKR (107 aa)) constitute a propeptide that is removed on maturation. 3 cysteine pairs are disulfide-bonded: Cys139–Cys204, Cys182–Cys232, and Cys192–Cys234. The N-linked (GlcNAc...) asparagine glycan is linked to Asn148.

Belongs to the NGF-beta family. In terms of assembly, homodimer; non-covalently linked. In terms of tissue distribution, expressed by the venom gland.

It localises to the secreted. Functionally, nerve growth factor is important for the development and maintenance of the sympathetic and sensory nervous systems. It stimulates division and differentiation of sympathetic and embryonic sensory neurons as well as basal forebrain cholinergic neurons in the brain. Its relevance in the snake venom is not clear. However, it has been shown to inhibit metalloproteinase-dependent proteolysis of platelet glycoprotein Ib alpha, suggesting a metalloproteinase inhibition to prevent metalloprotease autodigestion and/or protection against prey proteases. Binds a lipid between the two protein chains in the homodimer. The lipid-bound form promotes histamine relase from mouse mast cells, contrary to the lipid-free form. In Naja sputatrix (Malayan spitting cobra), this protein is Venom nerve growth factor 1.